The following is a 189-amino-acid chain: Protein shisa-like-2A (189 aa).

The next 2 helical transmembrane spans lie at 48–68 (SFFP…LVGL) and 70–90 (TAAV…YLFI). Residues 98–189 (LDPGLSLQTT…PTPGPHGPVP (92 aa)) form a disordered region. The span at 140–171 (NTHLESNKKQTVSPTCLPQNQFMATVTASNIP) shows a compositional bias: polar residues.

Belongs to the shisa family.

The protein localises to the membrane. The sequence is that of Protein shisa-like-2A (Shisal2a) from Mus musculus (Mouse).